The chain runs to 334 residues: Fructose-1,6-bisphosphatase class 1 (334 aa).

Residues Glu92, Asp114, Leu116, and Asp117 each coordinate Mg(2+). Substrate-binding positions include 117–120 and Asn209; that span reads DGSS. Glu281 contacts Mg(2+).

The protein belongs to the FBPase class 1 family. Homotetramer. Requires Mg(2+) as cofactor.

It is found in the cytoplasm. The catalysed reaction is beta-D-fructose 1,6-bisphosphate + H2O = beta-D-fructose 6-phosphate + phosphate. It functions in the pathway carbohydrate biosynthesis; gluconeogenesis. In Nitrosomonas europaea (strain ATCC 19718 / CIP 103999 / KCTC 2705 / NBRC 14298), this protein is Fructose-1,6-bisphosphatase class 1.